The following is a 735-amino-acid chain: Delta-1-pyrroline-5-carboxylate synthase 2 (735 aa).

Positions 1 to 315 (MGRGGIGGAG…WGCSKEATAR (315 aa)) are glutamate 5-kinase. Residues S79, D176, and N195 each coordinate substrate. ATP-binding positions include 215–216 (SD), 221–226 (YSGPPS), and 255–261 (RGGMQAK). Residues 316–735 (EMAVAARDCS…VYTHRELPLQ (420 aa)) are gamma-glutamyl phosphate reductase.

This sequence in the N-terminal section; belongs to the glutamate 5-kinase family. In the C-terminal section; belongs to the gamma-glutamyl phosphate reductase family.

The catalysed reaction is L-glutamate + ATP = L-glutamyl 5-phosphate + ADP. It catalyses the reaction L-glutamate 5-semialdehyde + phosphate + NADP(+) = L-glutamyl 5-phosphate + NADPH + H(+). The protein operates within amino-acid biosynthesis; L-proline biosynthesis; L-glutamate 5-semialdehyde from L-glutamate: step 1/2. Its pathway is amino-acid biosynthesis; L-proline biosynthesis; L-glutamate 5-semialdehyde from L-glutamate: step 2/2. With respect to regulation, feedback regulated by proline. Its function is as follows. P5CS plays a key role in proline biosynthesis, leading to osmoregulation in plants. Involved in abiotic stress tolerance. This Oryza sativa subsp. japonica (Rice) protein is Delta-1-pyrroline-5-carboxylate synthase 2.